A 749-amino-acid polypeptide reads, in one-letter code: Catalase-peroxidase (749 aa).

A cross-link (tryptophyl-tyrosyl-methioninium (Trp-Tyr) (with M-260)) is located at residues 98-234; it reads WHAAGTYRVQ…LAASHMGLIY (137 aa). H99 serves as the catalytic Proton acceptor. Residues 234-260 constitute a cross-link (tryptophyl-tyrosyl-methioninium (Tyr-Met) (with W-98)); it reads YVNPEGPNGEPDPVAAAHDIRTTFGRM. H275 provides a ligand contact to heme b.

This sequence belongs to the peroxidase family. Peroxidase/catalase subfamily. In terms of assembly, homodimer or homotetramer. The cofactor is heme b. Post-translationally, formation of the three residue Trp-Tyr-Met cross-link is important for the catalase, but not the peroxidase activity of the enzyme.

Its subcellular location is the cytoplasm. It catalyses the reaction H2O2 + AH2 = A + 2 H2O. It carries out the reaction 2 H2O2 = O2 + 2 H2O. In terms of biological role, bifunctional enzyme with both catalase and broad-spectrum peroxidase activity. The sequence is that of Catalase-peroxidase from Mycosarcoma maydis (Corn smut fungus).